The following is a 450-amino-acid chain: F-box protein KIB3 (450 aa).

The F-box domain maps to 20–50; sequence DLVRLILERLSFVDFHRARCVSSTWYVASKS.

It localises to the cytoplasm. Its subcellular location is the nucleus. The protein resides in the nucleolus. Functionally, component of SCF(ASK-cullin-F-box) E3 ubiquitin ligase complexes, which may mediate the ubiquitination and subsequent proteasomal degradation of target proteins. Required for brassinosteroid (BR) signal transduction. Mediates ASK7/BIN2/SK21 inactivation both by competing with substrate binding (e.g. BZR1) and by promoting its ubiquitination and subsequent proteasomal degradation. The protein is F-box protein KIB3 of Arabidopsis thaliana (Mouse-ear cress).